Here is a 384-residue protein sequence, read N- to C-terminus: NADP-dependent alcohol dehydrogenase 3 (384 aa).

Belongs to the iron-containing alcohol dehydrogenase family.

The enzyme catalyses a primary alcohol + NADP(+) = an aldehyde + NADPH + H(+). Has NADP-dependent alcohol dehydrogenase activity. The sequence is that of NADP-dependent alcohol dehydrogenase 3 from Entamoeba histolytica (strain ATCC 30459 / HM-1:IMSS / ABRM).